The following is a 332-amino-acid chain: Cysteine and histidine-rich domain-containing protein 1 (332 aa).

The residue at position 2 (alanine 2) is an N-acetylalanine. Positions 2–77 are interaction with PPP5C; it reads ALLCYNRGCG…KPPEPVKPEV (76 aa). 6 residues coordinate Zn(2+): cysteine 5, cysteine 10, cysteine 24, histidine 27, cysteine 42, and cysteine 43. CHORD domains lie at 5-64 and 157-216; these read CYNR…KGRH and CKNG…KGKH. Threonine 47 carries the phosphothreonine modification. Serine 51 carries the post-translational modification Phosphoserine. Residues cysteine 59, histidine 64, cysteine 157, cysteine 162, cysteine 176, histidine 179, cysteine 194, cysteine 195, cysteine 211, and histidine 216 each coordinate Zn(2+). The interval 65–316 is interaction with HSP90AA1 and HSP90AB1; the sequence is NSEKPPEPVK…AEPMQWASLE (252 aa). Residues 227 to 316 enclose the CS domain; sequence VVPCRHDWHQ…AEPMQWASLE (90 aa).

As to quaternary structure, interacts with HSP90AA1, ROCK1 and ROCK2. Interacts with HSP90AB1 and PPP5C. In terms of tissue distribution, underexpressed in many breast and lung cancers.

In terms of biological role, regulates centrosome duplication, probably by inhibiting the kinase activity of ROCK2. Proposed to act as co-chaperone for HSP90. May play a role in the regulation of NOD1 via a HSP90 chaperone complex. In vitro, has intrinsic chaperone activity. This function may be achieved by inhibiting association of ROCK2 with NPM1. Plays a role in ensuring the localization of the tyrosine kinase receptor EGFR to the plasma membrane, and thus ensures the subsequent regulation of EGFR activity and EGF-induced actin cytoskeleton remodeling. Involved in stress response. Prevents tumorigenesis. The polypeptide is Cysteine and histidine-rich domain-containing protein 1 (CHORDC1) (Homo sapiens (Human)).